Consider the following 316-residue polypeptide: Thiamine-monophosphate kinase (316 aa).

Mg(2+) is bound by residues aspartate 26, threonine 49, and aspartate 50. Aspartate 57 is a substrate binding site. Residue aspartate 79 coordinates Mg(2+). Residues tyrosine 109, 126 to 127 (GD), and arginine 151 contribute to the ATP site. Residue aspartate 127 coordinates Mg(2+). Aspartate 198 is a binding site for Mg(2+). Serine 200 contacts ATP. Aspartate 201 is a binding site for Mg(2+). Substrate contacts are provided by glutamate 251 and phenylalanine 305.

The protein belongs to the thiamine-monophosphate kinase family.

It carries out the reaction thiamine phosphate + ATP = thiamine diphosphate + ADP. Its pathway is cofactor biosynthesis; thiamine diphosphate biosynthesis; thiamine diphosphate from thiamine phosphate: step 1/1. Functionally, catalyzes the ATP-dependent phosphorylation of thiamine-monophosphate (TMP) to form thiamine-pyrophosphate (TPP), the active form of vitamin B1. The protein is Thiamine-monophosphate kinase of Rhodopirellula baltica (strain DSM 10527 / NCIMB 13988 / SH1).